Consider the following 206-residue polypeptide: MKTYSLLLGLFISFGVLAHPHAFIDIQTTPIIENNQLTGFSMKWTLDEPSSSAVIYDMKQARTKAEKQKLLDDVMGNIVSEHYFSYLYDAQNNKIKYSPRPKNYGINVQGLQLQYYFDVPLAHPQKLEKNTFSLQTYDPTYYVAMTYASKSAVDFSALSKNCQGKLIEPNVDEKIQAYASSLDKSQKNEDDSLGVMFAQKIIIQCE.

A signal peptide spans 1–18; sequence MKTYSLLLGLFISFGVLA.

This is an uncharacterized protein from Haemophilus influenzae (strain ATCC 51907 / DSM 11121 / KW20 / Rd).